The primary structure comprises 140 residues: NADH-quinone oxidoreductase subunit I (140 aa).

2 consecutive 4Fe-4S ferredoxin-type domains span residues 42-71 (GSFT…VGSI) and 81-110 (ASYE…FNQE). Positions 51, 54, 57, 61, 90, 93, 96, and 100 each coordinate [4Fe-4S] cluster.

The protein belongs to the complex I 23 kDa subunit family. As to quaternary structure, NDH-1 is composed of 14 different subunits. Subunits NuoA, H, J, K, L, M, N constitute the membrane sector of the complex. Requires [4Fe-4S] cluster as cofactor.

It is found in the cell membrane. It carries out the reaction a quinone + NADH + 5 H(+)(in) = a quinol + NAD(+) + 4 H(+)(out). In terms of biological role, NDH-1 shuttles electrons from NADH, via FMN and iron-sulfur (Fe-S) centers, to quinones in the respiratory chain. The immediate electron acceptor for the enzyme in this species is believed to be ubiquinone. Couples the redox reaction to proton translocation (for every two electrons transferred, four hydrogen ions are translocated across the cytoplasmic membrane), and thus conserves the redox energy in a proton gradient. This is NADH-quinone oxidoreductase subunit I from Carboxydothermus hydrogenoformans (strain ATCC BAA-161 / DSM 6008 / Z-2901).